Reading from the N-terminus, the 489-residue chain is Glycogen synthase (489 aa).

Lys17 serves as a coordination point for ADP-alpha-D-glucose.

Belongs to the glycosyltransferase 1 family. Bacterial/plant glycogen synthase subfamily.

It catalyses the reaction [(1-&gt;4)-alpha-D-glucosyl](n) + ADP-alpha-D-glucose = [(1-&gt;4)-alpha-D-glucosyl](n+1) + ADP + H(+). Its pathway is glycan biosynthesis; glycogen biosynthesis. Its function is as follows. Synthesizes alpha-1,4-glucan chains using ADP-glucose. This chain is Glycogen synthase, found in Nitratidesulfovibrio vulgaris (strain ATCC 29579 / DSM 644 / CCUG 34227 / NCIMB 8303 / VKM B-1760 / Hildenborough) (Desulfovibrio vulgaris).